A 914-amino-acid polypeptide reads, in one-letter code: Exoglucanase-2 (914 aa).

Positions 1 to 33 (MKRRLMKGISLLTLVFLIGIMLQLSLKSELTAY) are cleaved as a signal peptide. In terms of domain architecture, CBM3 spans 763–914 (VEGVLIIQSF…SGNLVYGIEP (152 aa)).

It belongs to the glycosyl hydrolase 48 (cellulase L) family.

The catalysed reaction is Hydrolysis of (1-&gt;4)-beta-D-glucosidic linkages in cellulose and cellotetraose, releasing cellobiose from the non-reducing ends of the chains.. The chain is Exoglucanase-2 (celY) from Thermoclostridium stercorarium (strain ATCC 35414 / DSM 8532 / NCIMB 11754) (Clostridium stercorarium).